A 161-amino-acid chain; its full sequence is LSWSALALTSAYPTGAPTSACFDMIPGHFASPQSEPAPYIITTPVSAVKAGDSIEVTISGKTAKDTMRGILLEARQGDKIVGTWTVKPNDNFSQLLNCGEPGNAVTHKHHANSEDKQTVSYLWTASGHLEGDVVFKVTIVKDYHTFWVAVPSAPVKILSHH.

An N-terminal signal peptide occupies residues 1 to 11 (LSWSALALTSA). Positions 12-161 (YPTGAPTSAC…SAPVKILSHH (150 aa)) constitute a Reelin domain. A disulfide bridge links Cys-21 with Cys-98. The N-linked (GlcNAc...) asparagine glycan is linked to Asn-91.

It belongs to the insect defense protein family.

It localises to the secreted. May have antimicrobial activity. This Antheraea mylitta (Tasar silkworm) protein is Putative defense protein 2.